The primary structure comprises 514 residues: Bifunctional purine biosynthesis protein PurH (514 aa).

The MGS-like domain occupies 1-142; that stretch reads MLALLSVSDK…KNFRHVSVVV (142 aa).

The protein belongs to the PurH family.

The catalysed reaction is (6R)-10-formyltetrahydrofolate + 5-amino-1-(5-phospho-beta-D-ribosyl)imidazole-4-carboxamide = 5-formamido-1-(5-phospho-D-ribosyl)imidazole-4-carboxamide + (6S)-5,6,7,8-tetrahydrofolate. It carries out the reaction IMP + H2O = 5-formamido-1-(5-phospho-D-ribosyl)imidazole-4-carboxamide. Its pathway is purine metabolism; IMP biosynthesis via de novo pathway; 5-formamido-1-(5-phospho-D-ribosyl)imidazole-4-carboxamide from 5-amino-1-(5-phospho-D-ribosyl)imidazole-4-carboxamide (10-formyl THF route): step 1/1. It functions in the pathway purine metabolism; IMP biosynthesis via de novo pathway; IMP from 5-formamido-1-(5-phospho-D-ribosyl)imidazole-4-carboxamide: step 1/1. The protein is Bifunctional purine biosynthesis protein PurH of Myxococcus xanthus (strain DK1622).